Reading from the N-terminus, the 496-residue chain is MLO-like protein 15 (496 aa).

Topologically, residues 1 to 9 (MAGGGTTLE) are extracellular. A helical membrane pass occupies residues 10 to 30 (YTPTWVVALVCSVIVSISFAV). Residues 31–59 (ERLIHRAGKHFKNNDQKQLFGALQKIKEE) are Cytoplasmic-facing. A helical transmembrane segment spans residues 60-80 (LMLVGFISLLLSVGQSKIAKI). At 81-147 (CISKELSEKF…MSLSALHELH (67 aa)) the chain is on the extracellular side. Residues 148 to 168 (IFIFVLAVAHIIFCLLTIVFG) form a helical membrane-spanning segment. The Cytoplasmic portion of the chain corresponds to 169–269 (TMKIKQWKKW…KYLMRALNSD (101 aa)). Residues 270 to 290 (FKKVVGISWYLWVFVVLFLLL) traverse the membrane as a helical segment. Asn-291 is a topological domain (extracellular). Residues 292 to 312 (IVAWHVYFWLAFIPLILLLAV) traverse the membrane as a helical segment. Residues 313–355 (GTKLEHIITDLAHEVAEKHIAVEGDLVVRPSDDLFWFQSPRLV) are Cytoplasmic-facing. Residues 356 to 376 (LFLIHFILFQNSFEIAYFFFI) form a helical membrane-spanning segment. Residues 377–397 (LFQFGWDSCIMDHVKFVIPRL) lie on the Extracellular side of the membrane. The helical transmembrane segment at 398–418 (VIGVIIQLLCSYSTLPLYALV) threads the bilayer. The Cytoplasmic segment spans residues 419–496 (TQMGSSFKGA…KEKSEIAHHD (78 aa)). Positions 432–453 (EQTQEHLVGWAKMAKRGVKKGA) are calmodulin-binding. Residues 454-496 (TQVGTSHDATSPRPSIQLNSLLGKGSSQQNQNPKEKSEIAHHD) are disordered. A compositionally biased stretch (polar residues) spans 455–485 (QVGTSHDATSPRPSIQLNSLLGKGSSQQNQN). Over residues 486-496 (PKEKSEIAHHD) the composition is skewed to basic and acidic residues.

Belongs to the MLO family.

It is found in the membrane. Functionally, may be involved in modulation of pathogen defense and leaf cell death. Activity seems to be regulated by Ca(2+)-dependent calmodulin binding and seems not to require heterotrimeric G proteins. This is MLO-like protein 15 (MLO15) from Arabidopsis thaliana (Mouse-ear cress).